The following is a 91-amino-acid chain: DNA-directed RNA polymerase subunit omega (91 aa).

This sequence belongs to the RNA polymerase subunit omega family. The RNAP catalytic core consists of 2 alpha, 1 beta, 1 beta' and 1 omega subunit. When a sigma factor is associated with the core the holoenzyme is formed, which can initiate transcription.

It catalyses the reaction RNA(n) + a ribonucleoside 5'-triphosphate = RNA(n+1) + diphosphate. Its function is as follows. Promotes RNA polymerase assembly. Latches the N- and C-terminal regions of the beta' subunit thereby facilitating its interaction with the beta and alpha subunits. This is DNA-directed RNA polymerase subunit omega from Actinobacillus pleuropneumoniae serotype 5b (strain L20).